The following is a 419-amino-acid chain: Monooxygenase CTB7 (419 aa).

The protein belongs to the aromatic-ring hydroxylase family. KMO subfamily.

Its pathway is mycotoxin biosynthesis. Monooxygenase; part of the gene cluster that mediates the biosynthesis of cercosporin, a light-activated, non-host-selective toxin. The perylenequinone chromophore of cercosporin absorbs light energy to attain an electronically-activated triplet state and produces active oxygen species such as the hydroxyl radical, superoxide, hydrogen peroxide or singlet oxygen upon reaction with oxygen molecules. These reactive oxygen species cause damage to various cellular components including lipids, proteins and nucleic acids. The first step of cercosporin biosynthesis is performed by the polyketide synthase CTB1 which catalyzes the formation of nor-toralactone. The starter unit acyltransferase (SAT) domain of CTB1 initiates polyketide extension by the selective utilization of acetyl-CoA, which is elongated to the heptaketide in the beta-ketoacyl synthase (KS) domain by successive condensations with six malonyl units introduced by the malonyl acyltransferase (MAT) domain. The product template (PT) domain catalyzes C4-C9 and C2-C11 aldol cyclizations and dehydrations to a trihydroxynaphthalene, which is thought to be delivered to the thioesterase (TE) domain for product release. The bifunctional enzyme CTB3 then methylates nor-toralactone to toralactone before conducting an unusual oxidative aromatic ring opening. The O-methyltransferase CTB2 further methylates the nascent OH-6 of the CBT3 product, blocking further oxidation at this site before the reductase CTB6 reduces the 2-oxopropyl ketone at position C7, giving naphthalene. The FAD-dependent monooxygenase CTB5 in concert with the multicopper oxidase CTB12 are responsible for homodimerization of naphthalene with CTB7 installing the dioxepine moiety, finally producing cercosporin. The fasciclin domain-containing protein CTB11 might act with CTB5 and CTB12 whereas the roles of CTB9 and CTB10 have still to be elucidated. The chain is Monooxygenase CTB7 from Cercospora beticola (Sugarbeet leaf spot fungus).